We begin with the raw amino-acid sequence, 222 residues long: N-(5'-phosphoribosyl)anthranilate isomerase (222 aa).

Belongs to the TrpF family.

It catalyses the reaction N-(5-phospho-beta-D-ribosyl)anthranilate = 1-(2-carboxyphenylamino)-1-deoxy-D-ribulose 5-phosphate. Its pathway is amino-acid biosynthesis; L-tryptophan biosynthesis; L-tryptophan from chorismate: step 3/5. The chain is N-(5'-phosphoribosyl)anthranilate isomerase from Rhizobium etli (strain CIAT 652).